The following is a 552-amino-acid chain: MPAPQPFLPLLFVFVLIHLTSETNLLPDPGSHPGMCPNELSPHLWVDAQSTCERECTGDQDCAASEKCCTNVCGLQSCVAARFPSGGPAVPETAASCEGFQCPQQGSDCDIWDGQPVCRCRDRCEKEPSFTCASDGLTYYNRCYMDAEACLRGLHLHVVPCKHILSWPPSSPGPPETTARPTPGAAPMPPALYNSPSPQAVHVGGTASLHCDVSGRPPPAVTWEKQSHQRENLIMRPDQMYGNVVVTSIGQLVLYNAQLEDAGLYTCTARNAAGLLRADFPLSVLQRATTQDRDPGIPALAECQADTQACVGPPTPHHVLWRFDPQRGSCMTFPALRCDGAARGFETYEACQQACVRGPGDVCALPAVQGPCQGWEPRWAYSPLLQQCHPFVYSGCEGNSNNFETRESCEDACPVPRTPPCRACRLKSKLALSLCRSDFAIVGRLTEVLEEPEAAGGIARVALDDVLKDDKMGLKFLGTKYLEVTLSGMDWACPCPNVTAVDGPLVIMGEVREGVAVLDANSYVRAASEKRVKKIVELLEKKACELLNRFQD.

An N-terminal signal peptide occupies residues 1 to 25 (MPAPQPFLPLLFVFVLIHLTSETNL). The WAP domain occupies 29-82 (PGSHPGMCPNELSPHLWVDAQSTCERECTGDQDCAASEKCCTNVCGLQSCVAAR). Intrachain disulfides connect cysteine 36–cysteine 69, cysteine 52–cysteine 73, cysteine 56–cysteine 68, cysteine 62–cysteine 78, cysteine 120–cysteine 150, cysteine 124–cysteine 143, cysteine 132–cysteine 161, cysteine 211–cysteine 267, cysteine 303–cysteine 355, cysteine 310–cysteine 338, cysteine 330–cysteine 351, cysteine 363–cysteine 413, cysteine 372–cysteine 396, cysteine 388–cysteine 409, cysteine 421–cysteine 493, cysteine 424–cysteine 495, and cysteine 435–cysteine 544. The region spanning 112-163 (WDGQPVCRCRDRCEKEPSFTCASDGLTYYNRCYMDAEACLRGLHLHVVPCKH) is the Kazal-like domain. One can recognise an Ig-like C2-type domain in the interval 190–283 (PALYNSPSPQ…GLLRADFPLS (94 aa)). BPTI/Kunitz inhibitor domains follow at residues 289-355 (TTQD…QQAC) and 363-413 (CALP…EDAC). Residues 413–544 (CPVPRTPPCR…IVELLEKKAC (132 aa)) enclose the NTR domain. Asparagine 497 carries an N-linked (GlcNAc...) asparagine glycan.

It belongs to the WFIKKN family.

It localises to the secreted. Its function is as follows. Protease-inhibitor that contains multiple distinct protease inhibitor domains. Probably has serine protease- and metalloprotease-inhibitor activity. This chain is WAP, Kazal, immunoglobulin, Kunitz and NTR domain-containing protein 1 (Wfikkn1), found in Mus musculus (Mouse).